A 1012-amino-acid polypeptide reads, in one-letter code: Translation initiation factor IF-2, chloroplastic (1012 aa).

Residues 75–102 (GNSVSLDSNSNSSSSSKSGGDDGTGFVL) show a composition bias toward low complexity. Disordered regions lie at residues 75–132 (GNSV…VEER), 147–294 (EKLG…KEKK), and 319–340 (APPK…RKKG). Over residues 152–175 (SKVNGDKNNGSVNKPVRNNANASP) the composition is skewed to polar residues. Residues 183 to 194 (SAASLKSKTLKS) are compositionally biased toward low complexity. Residues 208–231 (VVKEVPKPSYNKNEEEKSQTRGGE) are compositionally biased toward basic and acidic residues. Positions 240-257 (PQPPSKPQPLKPQQPSKP) are enriched in pro residues. Positions 277-294 (VLRDKGAAETSVKSKEKK) are enriched in basic and acidic residues. A tr-type G domain is found at 488-661 (DRPPVITIMG…MLVAELQELK (174 aa)). The G1 stretch occupies residues 497–504 (GHVDHGKT). 497–504 (GHVDHGKT) is a binding site for GTP. A G2 region spans residues 522-526 (GITQG). Positions 547 to 550 (DTPG) are G3. GTP-binding positions include 547-551 (DTPGH) and 601-604 (NKID). Residues 601-604 (NKID) are G4. The G5 stretch occupies residues 637 to 639 (SAL).

The protein belongs to the TRAFAC class translation factor GTPase superfamily. Classic translation factor GTPase family. IF-2 subfamily.

It is found in the plastid. Its subcellular location is the chloroplast. In terms of biological role, one of the essential components for the initiation of protein synthesis. Protects formylmethionyl-tRNA from spontaneous hydrolysis and promotes its binding to the 30S ribosomal subunits. Also involved in the hydrolysis of GTP during the formation of the 70S ribosomal complex. The chain is Translation initiation factor IF-2, chloroplastic (IF2CP) from Phaseolus vulgaris (Kidney bean).